The sequence spans 151 residues: Large ribosomal subunit protein uL22 (151 aa).

Residues 1 to 18 show a composition bias toward polar residues; the sequence is MARINYSINGDPETTSKA. Positions 1-23 are disordered; sequence MARINYSINGDPETTSKAMGSEL.

The protein belongs to the universal ribosomal protein uL22 family. In terms of assembly, part of the 50S ribosomal subunit.

This protein binds specifically to 23S rRNA. It makes multiple contacts with different domains of the 23S rRNA in the assembled 50S subunit and ribosome. In terms of biological role, the globular domain of the protein is located near the polypeptide exit tunnel on the outside of the subunit, while an extended beta-hairpin is found that lines the wall of the exit tunnel in the center of the 70S ribosome. This is Large ribosomal subunit protein uL22 from Methanosarcina acetivorans (strain ATCC 35395 / DSM 2834 / JCM 12185 / C2A).